Reading from the N-terminus, the 555-residue chain is CTP synthase (555 aa).

Residues methionine 1–isoleucine 271 form an amidoligase domain region. Position 19 (serine 19) interacts with CTP. Serine 19 is a binding site for UTP. ATP is bound by residues serine 20–leucine 25 and aspartate 77. Mg(2+) contacts are provided by aspartate 77 and glutamate 145. Residues aspartate 152 to glutamate 154, lysine 192 to glutamine 197, and lysine 228 each bind CTP. UTP is bound by residues lysine 192–glutamine 197 and lysine 228. Residues arginine 297 to alanine 537 enclose the Glutamine amidotransferase type-1 domain. An L-glutamine-binding site is contributed by glycine 358. Cysteine 385 acts as the Nucleophile; for glutamine hydrolysis in catalysis. L-glutamine contacts are provided by residues leucine 386 to glutamine 389, glutamate 409, and arginine 466. Catalysis depends on residues histidine 510 and glutamate 512. A disordered region spans residues aspartate 536–glycine 555.

Belongs to the CTP synthase family. In terms of assembly, homotetramer.

It catalyses the reaction UTP + L-glutamine + ATP + H2O = CTP + L-glutamate + ADP + phosphate + 2 H(+). It carries out the reaction L-glutamine + H2O = L-glutamate + NH4(+). The catalysed reaction is UTP + NH4(+) + ATP = CTP + ADP + phosphate + 2 H(+). The protein operates within pyrimidine metabolism; CTP biosynthesis via de novo pathway; CTP from UDP: step 2/2. Allosterically activated by GTP, when glutamine is the substrate; GTP has no effect on the reaction when ammonia is the substrate. The allosteric effector GTP functions by stabilizing the protein conformation that binds the tetrahedral intermediate(s) formed during glutamine hydrolysis. Inhibited by the product CTP, via allosteric rather than competitive inhibition. Functionally, catalyzes the ATP-dependent amination of UTP to CTP with either L-glutamine or ammonia as the source of nitrogen. Regulates intracellular CTP levels through interactions with the four ribonucleotide triphosphates. This is CTP synthase from Anaeromyxobacter dehalogenans (strain 2CP-C).